The chain runs to 258 residues: MAVAVRVIPCLDVDAGRVVKGVNFEGLRDAGDPVELAHRYDNGGADELTFLDVTASSGNRETTFDVVRRTAEEVFIPLTVGGGVRGVAEVDKLLRFGADKASINTAAVARPDVIDEITRHFGSQVLVLSVDARRTREGDQPTSSGFEVTTHGGRTGTGIDAVAWAKEAADRGVGEILLNSIDADGTKDGFDLELIRLVRAAVNIPIIASGGAGVPAHFPPAVEAGADAVLAASVFHFGPDDMIAQVKTAIRDAGFEVR.

Residues aspartate 12 and aspartate 131 contribute to the active site.

Belongs to the HisA/HisF family. Heterodimer of HisH and HisF.

The protein localises to the cytoplasm. It catalyses the reaction 5-[(5-phospho-1-deoxy-D-ribulos-1-ylimino)methylamino]-1-(5-phospho-beta-D-ribosyl)imidazole-4-carboxamide + L-glutamine = D-erythro-1-(imidazol-4-yl)glycerol 3-phosphate + 5-amino-1-(5-phospho-beta-D-ribosyl)imidazole-4-carboxamide + L-glutamate + H(+). Its pathway is amino-acid biosynthesis; L-histidine biosynthesis; L-histidine from 5-phospho-alpha-D-ribose 1-diphosphate: step 5/9. In terms of biological role, IGPS catalyzes the conversion of PRFAR and glutamine to IGP, AICAR and glutamate. The HisF subunit catalyzes the cyclization activity that produces IGP and AICAR from PRFAR using the ammonia provided by the HisH subunit. The sequence is that of Imidazole glycerol phosphate synthase subunit HisF from Paenarthrobacter aurescens (strain TC1).